The following is a 33-amino-acid chain: Brevinin-2DYa (33 aa).

The cysteines at positions 27 and 33 are disulfide-linked.

As to expression, expressed by the skin glands.

Its subcellular location is the secreted. Antimicrobial peptide. In Rana dybowskii (Dybovsky's frog), this protein is Brevinin-2DYa.